The following is a 254-amino-acid chain: NAD-dependent protein deacetylase 1 (254 aa).

A Deacetylase sirtuin-type domain is found at 5-254 (ASDLRSGVER…GETLGPFVGN (250 aa)). Positions 31, 35, 42, 43, 108, 110, 111, and 128 each coordinate NAD(+). Nicotinamide is bound at residue F42. Nicotinamide-binding residues include I110 and D111. H128 serves as the catalytic Proton acceptor. Residues C136, C139, C160, and C163 each coordinate Zn(2+). Residues S201, S202, N226, D243, and I244 each contribute to the NAD(+) site.

The protein belongs to the sirtuin family. Class U subfamily. The cofactor is Zn(2+).

The protein resides in the cytoplasm. The enzyme catalyses N(6)-acetyl-L-lysyl-[protein] + NAD(+) + H2O = 2''-O-acetyl-ADP-D-ribose + nicotinamide + L-lysyl-[protein]. In terms of biological role, NAD-dependent protein deacetylase which modulates the activities of several enzymes which are inactive in their acetylated form. The sequence is that of NAD-dependent protein deacetylase 1 from Bradyrhizobium diazoefficiens (strain JCM 10833 / BCRC 13528 / IAM 13628 / NBRC 14792 / USDA 110).